The chain runs to 461 residues: Mitochondrial distribution and morphology protein 12 (461 aa).

Residues 1–454 (MSLDLDWNLL…YPNYYTIDLP (454 aa)) form the SMP-LTD domain. Disordered regions lie at residues 75–104 (RRRG…VHHG) and 226–301 (DASS…PSSA). Composition is skewed to polar residues over residues 80 to 97 (RQTT…SPTD) and 272 to 288 (RATS…QNSP).

The protein belongs to the MDM12 family. Component of the ER-mitochondria encounter structure (ERMES) or MDM complex, composed of MMM1, MDM10, MDM12 and MDM34. An MMM1 homodimer associates with one molecule of MDM12 on each side in a pairwise head-to-tail manner, and the SMP-LTD domains of MMM1 and MDM12 generate a continuous hydrophobic tunnel for phospholipid trafficking.

The protein resides in the mitochondrion outer membrane. It is found in the endoplasmic reticulum membrane. Its function is as follows. Component of the ERMES/MDM complex, which serves as a molecular tether to connect the endoplasmic reticulum (ER) and mitochondria. Components of this complex are involved in the control of mitochondrial shape and protein biogenesis, and function in nonvesicular lipid trafficking between the ER and mitochondria. MDM12 is required for the interaction of the ER-resident membrane protein MMM1 and the outer mitochondrial membrane-resident beta-barrel protein MDM10. The MDM12-MMM1 subcomplex functions in the major beta-barrel assembly pathway that is responsible for biogenesis of all mitochondrial outer membrane beta-barrel proteins, and acts in a late step after the SAM complex. The MDM10-MDM12-MMM1 subcomplex further acts in the TOM40-specific pathway after the action of the MDM12-MMM1 complex. Essential for establishing and maintaining the structure of mitochondria and maintenance of mtDNA nucleoids. The chain is Mitochondrial distribution and morphology protein 12 from Mycosarcoma maydis (Corn smut fungus).